The primary structure comprises 790 residues: MSTPLRGSSPQVSFYESELDQEGGSDASHFTYRNYMEDDKINSFTFNMARKDQTQLFQRIILTNESESEIEEYAEVAEQLLDAINLREKYVFHPKIWKADAPVGEKPPYSPFESDESTNCATEHMFKEVNGVYFVYSNETDMKSNKALFSVPHTLASYYKDINNLMMLSSYGPAKTFTFKRLQLLESKFNMHTLLNDSLELFQQKTAPHRDFYNVRKVDTHVHHSSSMNQKHLLKFIKRKLKENPNEIVIFRDDKYLTLAEVFKSLNLDVDELSVDTLDVHADNNTFHRFDKFNLKYNPCGQSRLREIFLKTDNLIKGKYLAEISKEVFTDLESSKYQCAEYRLSIYGRKMSEWDTLASWIVDNDLFSTKVRWLIQVPRLYDVYRETSTTTFQDFLNNVFHPLFEVTKDPSSHPKLHLFLQQVVGIDCVDDESKFEKKFTEKFPVPGEWSSEHNPPYTYYLYYLYANLYTLNQFREEKGLNILTLRPHSGEAGEVDHMGAAFYLAHGINHGINLRKTPVLQYLYYLTQIGIAMSPLSNNSLFLTYNRNPFPAFFARGLNVSISTDDPLQFHYTKEPLMEEYSIATQVWRLSVCDICEIARNSVLQSGFEHNVKSHWLGPDYANSGGNDIKKTNISDIRVCFRNETLIEELHLILKSLQTLPNFKNLNINFLLDKLPSEITTGNDYKLKKAQLKLNGANKLRNSSVGSTPNNGTPSSSGTPSLSSPGAIVHLMKTKPYIPPPLSLNIKQENNNNNNNNNNNNNNNNNNNTNTNTNSNSTTTNQDDNSKSDK.

The segment covering 1–14 (MSTPLRGSSPQVSF) has biased composition (polar residues). Residues 1–26 (MSTPLRGSSPQVSFYESELDQEGGSD) are disordered. Residues histidine 221 and histidine 223 each coordinate Zn(2+). Substrate-binding positions include histidine 223 and 292–297 (KFNLKY). Zn(2+) is bound at residue histidine 488. Glutamate 491 is a binding site for substrate. Catalysis depends on histidine 510, which acts as the Proton acceptor. Aspartate 565 lines the Zn(2+) pocket. Residue 566-569 (DPLQ) participates in substrate binding. Disordered regions lie at residues 698-726 (NKLRNSSVGSTPNNGTPSSSGTPSLSSPG) and 739-790 (PPPL…KSDK). Composition is skewed to low complexity over residues 706 to 726 (GSTPNNGTPSSSGTPSLSSPG) and 750 to 781 (NNNNNNNNNNNNNNNNNNNTNTNTNSNSTTTN).

This sequence belongs to the metallo-dependent hydrolases superfamily. Adenosine and AMP deaminases family. As to quaternary structure, homodimer. Requires Zn(2+) as cofactor.

The protein localises to the cytoplasm. The catalysed reaction is AMP + H2O + H(+) = IMP + NH4(+). Its pathway is purine metabolism; IMP biosynthesis via salvage pathway; IMP from AMP: step 1/1. Activated by ATP, inhibited by GTP, EDTA and inorganic phosphate. Catalyzes the conversion of adenosine monophosphate (AMP) to inosine monophosphate (IMP) and ammonia (NH4(+)). Participates in the regulation of the adenylated nucleotide pool and the interconversion to guanylated nucleotides during early morphodifferentiation. This is AMP deaminase (amdA) from Dictyostelium discoideum (Social amoeba).